A 1257-amino-acid polypeptide reads, in one-letter code: Receptor tyrosine-protein kinase erbB-2 (1257 aa).

An N-terminal signal peptide occupies residues 1 to 22; the sequence is MELAAWCRWGFLLALLPPGIAG. At 23–654 the chain is on the extracellular side; that stretch reads TQVCTGTDMK…PAEQRASPVT (632 aa). Cys26 and Cys53 are joined by a disulfide. Residues Asn68 and Asn188 are each glycosylated (N-linked (GlcNAc...) asparagine). 16 disulfide bridges follow: Cys163–Cys193, Cys196–Cys205, Cys200–Cys213, Cys221–Cys228, Cys225–Cys236, Cys237–Cys245, Cys241–Cys253, Cys256–Cys265, Cys269–Cys296, Cys300–Cys312, Cys316–Cys332, Cys335–Cys339, Cys343–Cys368, Cys476–Cys506, Cys513–Cys522, and Cys517–Cys530. Residue Asn260 is glycosylated (N-linked (GlcNAc...) asparagine). Residue Asn532 is glycosylated (N-linked (GlcNAc...) asparagine). 8 cysteine pairs are disulfide-bonded: Cys533–Cys542, Cys546–Cys562, Cys565–Cys578, Cys569–Cys586, Cys589–Cys598, Cys602–Cys625, Cys628–Cys636, and Cys632–Cys644. An N-linked (GlcNAc...) asparagine glycan is attached at Asn573. Asn631 carries an N-linked (GlcNAc...) asparagine glycan. A helical membrane pass occupies residues 655-677; sequence FIIATVVGVLLFLILVVVVGILI. The interval 678 to 691 is required for interaction with KPNB1 and EEA1; that stretch reads KRRRQKIRKYTMRR. Residues 678 to 691 carry the Nuclear localization signal motif; it reads KRRRQKIRKYTMRR. The Cytoplasmic portion of the chain corresponds to 678–1257; that stretch reads KRRRQKIRKY…PEYLGLDVPV (580 aa). The 268-residue stretch at 722 to 989 folds into the Protein kinase domain; it reads LRKVKVLGSG…RMARDPQRFV (268 aa). ATP contacts are provided by residues 728–736 and Lys755; that span reads LGSGAFGTV. The active-site Proton acceptor is Asp847. At Tyr879 the chain carries Phosphotyrosine. Residues 1029-1181 form a disordered region; the sequence is QQGFFSPDPT…PKTLSPGKNG (153 aa). Phosphoserine is present on residues Ser1056, Ser1080, Ser1085, and Ser1109. At Tyr1114 the chain carries Phosphotyrosine. A Phosphotyrosine; by autocatalysis modification is found at Tyr1141. Residues 1149–1163 are compositionally biased toward pro residues; that stretch reads PQPPLTPEGPLPPVR. Thr1168 carries the post-translational modification Phosphothreonine. An interaction with PIK3C2B region spans residues 1197-1199; sequence EYL. The residue at position 1198 (Tyr1198) is a Phosphotyrosine. A disordered region spans residues 1200-1257; it reads VPREGTASPPHPSPAFSPAFDNLYYWDQNSSEQGPPPSNFEGTPTAENPEYLGLDVPV. A Phosphotyrosine; by autocatalysis modification is found at Tyr1250.

The protein belongs to the protein kinase superfamily. Tyr protein kinase family. EGF receptor subfamily. In terms of assembly, homodimer. Heterodimer with EGFR, ERBB3 and ERBB4. Part of a complex with EGFR and either PIK3C2A or PIK3C2B. May interact with PIK3C2B when phosphorylated on Tyr-1198. Interacts with PRKCABP and PLXNB1. Interacts (when phosphorylated on Tyr-1250) with MEMO1. Interacts with MUC1. Interacts (when phosphorylated on Tyr-1141) with GRB7 (via SH2 domain). Interacts (when phosphorylated on Tyr-1250) with ERBIN Interacts with SRC, KPNB1, RANBP2, EEA1, CRM1, CLTC, PTK6, RPA194, MYOC and ACTB. Interacts with HSP90AA1 and HSP90AB1; the interaction suppresses ERBB2 kinase activity. Interacts with SORL1; this interaction regulates ERBB2 subcellular distribution by promoting its recycling after internalization from endosomes back to the plasma membrane, hence stimulates ERBB2-mediated signaling. Interacts with SH3BGRL. Interacts with ROR1. Autophosphorylated. Autophosphorylation occurs in trans, i.e. one subunit of the dimeric receptor phosphorylates tyrosine residues on the other subunit. Ligand-binding increases phosphorylation on tyrosine residues. Signaling via SEMA4C promotes phosphorylation at Tyr-1250. Dephosphorylated by PTPN12.

The protein localises to the cell membrane. It is found in the cell projection. The protein resides in the ruffle membrane. It localises to the early endosome. Its subcellular location is the cytoplasm. The protein localises to the perinuclear region. It is found in the nucleus. The catalysed reaction is L-tyrosyl-[protein] + ATP = O-phospho-L-tyrosyl-[protein] + ADP + H(+). Protein tyrosine kinase that is part of several cell surface receptor complexes, but that apparently needs a coreceptor for ligand binding. Essential component of a neuregulin-receptor complex, although neuregulins do not interact with it alone. GP30 is a potential ligand for this receptor. Regulates outgrowth and stabilization of peripheral microtubules (MTs). Upon ERBB2 activation, the MEMO1-RHOA-DIAPH1 signaling pathway elicits the phosphorylation and thus the inhibition of GSK3B at cell membrane. This prevents the phosphorylation of APC and CLASP2, allowing its association with the cell membrane. In turn, membrane-bound APC allows the localization of MACF1 to the cell membrane, which is required for microtubule capture and stabilization. Interacts (preferentially with the tyrosine phosphorylated form) with CPNE3; this interaction occurs at the cell membrane and is increased in a growth factor heregulin-dependent manner. Its function is as follows. In the nucleus is involved in transcriptional regulation. Associates with the 5'-TCAAATTC-3' sequence in the PTGS2/COX-2 promoter and activates its transcription. Implicated in transcriptional activation of CDKN1A; the function involves STAT3 and SRC. Involved in the transcription of rRNA genes by RNA Pol I and enhances protein synthesis and cell growth. In Rattus norvegicus (Rat), this protein is Receptor tyrosine-protein kinase erbB-2 (Erbb2).